We begin with the raw amino-acid sequence, 100 residues long: uncharacterized protein (100 aa).

A disordered region spans residues 40 to 100 (GDQMARKATS…DPTKNKSGRG (61 aa)).

This is an uncharacterized protein from Mycobacterium tuberculosis (strain ATCC 25618 / H37Rv).